The following is a 344-amino-acid chain: Anthranilate phosphoribosyltransferase (344 aa).

5-phospho-alpha-D-ribose 1-diphosphate contacts are provided by residues Gly-80, 83–84 (GD), Thr-88, 90–93 (NIST), 108–116 (KHGNRSVSS), and Ser-120. An anthranilate-binding site is contributed by Gly-80. Ser-92 contributes to the Mg(2+) binding site. Position 111 (Asn-111) interacts with anthranilate. Arg-166 lines the anthranilate pocket. The Mg(2+) site is built by Asp-225 and Glu-226.

It belongs to the anthranilate phosphoribosyltransferase family. As to quaternary structure, homodimer. Requires Mg(2+) as cofactor.

The catalysed reaction is N-(5-phospho-beta-D-ribosyl)anthranilate + diphosphate = 5-phospho-alpha-D-ribose 1-diphosphate + anthranilate. Its pathway is amino-acid biosynthesis; L-tryptophan biosynthesis; L-tryptophan from chorismate: step 2/5. Its function is as follows. Catalyzes the transfer of the phosphoribosyl group of 5-phosphorylribose-1-pyrophosphate (PRPP) to anthranilate to yield N-(5'-phosphoribosyl)-anthranilate (PRA). The protein is Anthranilate phosphoribosyltransferase of Petrotoga mobilis (strain DSM 10674 / SJ95).